The primary structure comprises 160 residues: Transcription factor 12 (160 aa).

Residues 1–58 (NKEKDENLHEPPSSDDMKSDDESSQKDIKVSSRGRTSTNEDEDLNPEQKIEREKERRM) form a disordered region. Positions 15–30 (DDMKSDDESSQKDIKV) are enriched in basic and acidic residues. Position 19 is a phosphoserine (Ser19). A Glycyl lysine isopeptide (Lys-Gly) (interchain with G-Cter in SUMO2) cross-link involves residue Lys29. A Phosphothreonine modification is found at Thr36. The residue at position 37 (Ser37) is a Phosphoserine. A compositionally biased stretch (basic and acidic residues) spans 46 to 58 (PEQKIEREKERRM). The bHLH domain maps to 55–108 (ERRMANNARERLRVRDINEAFKELGRMCQLHLKSEKPQTKLLILHQAVAVILSL). Residues Lys87 and Lys131 each participate in a glycyl lysine isopeptide (Lys-Gly) (interchain with G-Cter in SUMO2) cross-link. Positions 110–133 (QQVRERNLNPKAACLKRREEEKVS) are class A specific domain. Residues 132–160 (VSVVSAEPPTTLPGTHPGLSETTNPMGHM) are disordered. Residues 139–150 (PPTTLPGTHPGL) show a composition bias toward low complexity. Positions 151–160 (SETTNPMGHM) are enriched in polar residues.

As to quaternary structure, efficient DNA binding requires dimerization with another bHLH protein. Forms homo- or heterooligomers with myogenin, E12 and ITF2 proteins. Interacts with PTF1A. Interacts with RUNX1T1. Interacts with NEUROD2. Interacts with BHLHA9.

The protein resides in the nucleus. In terms of biological role, transcriptional regulator. Involved in the initiation of neuronal differentiation. Activates transcription by binding to the E box (5'-CANNTG-3'). May be involved in the functional network that regulates the development of the GnRH axis. The polypeptide is Transcription factor 12 (TCF12) (Papio hamadryas (Hamadryas baboon)).